The sequence spans 226 residues: Protein AF-9 homolog (226 aa).

The region spanning 8–169 (RIKTLSVSRP…EEFFKILMSR (162 aa)) is the YEATS domain. Residues 187-224 (QLEQEEIDRIEIGIEKVDKEIDELKQKLENLVKQEAIN) adopt a coiled-coil conformation.

In terms of assembly, component of the SWR1 chromatin-remodeling complex composed of at least ACT1, ARP4, RVB1, RVB2, ARP6, YAF9, VPS71, VPS72, SWC3, SWC4, SWC5, SWC7 and SWR1, and perhaps BDF1. Component of the NuA4 histone acetyltransferase complex composed of at least ACT1, ARP4, YAF9, VID21, SWC4, EAF3, EAF5, EAF6, EAF7, EPL1, ESA1, TRA1 and YNG2. Interacts with SWC4.

It localises to the cytoplasm. It is found in the nucleus. Its function is as follows. Component of the SWR1 complex which mediates the ATP-dependent exchange of histone H2A for the H2A variant HZT1 leading to transcriptional regulation of selected genes by chromatin remodeling. Component of the NuA4 histone acetyltransferase complex which is involved in transcriptional activation of selected genes principally by acetylation of nucleosomal histones H4 and H2A. The NuA4 complex is also involved in DNA repair. Yaf9 may also be required for viability in conditions in which the structural integrity of the spindle is compromised. In Saccharomyces cerevisiae (strain ATCC 204508 / S288c) (Baker's yeast), this protein is Protein AF-9 homolog (YAF9).